A 307-amino-acid chain; its full sequence is Glutaminase (307 aa).

The substrate site is built by Ser-67, Asn-117, Glu-161, Asn-168, Tyr-192, Tyr-243, and Val-261.

It belongs to the glutaminase family. Homotetramer.

It catalyses the reaction L-glutamine + H2O = L-glutamate + NH4(+). The polypeptide is Glutaminase (Streptomyces coelicolor (strain ATCC BAA-471 / A3(2) / M145)).